We begin with the raw amino-acid sequence, 339 residues long: Glycerol-3-phosphate dehydrogenase [NAD(P)+] (339 aa).

NADPH is bound by residues S13, W14, and K108. Positions 108, 139, and 141 each coordinate sn-glycerol 3-phosphate. A143 is an NADPH binding site. Sn-glycerol 3-phosphate is bound by residues K194, D247, S257, R258, and N259. K194 (proton acceptor) is an active-site residue. R258 serves as a coordination point for NADPH. NADPH-binding residues include V282 and E284.

This sequence belongs to the NAD-dependent glycerol-3-phosphate dehydrogenase family.

The protein resides in the cytoplasm. It carries out the reaction sn-glycerol 3-phosphate + NAD(+) = dihydroxyacetone phosphate + NADH + H(+). The enzyme catalyses sn-glycerol 3-phosphate + NADP(+) = dihydroxyacetone phosphate + NADPH + H(+). Its pathway is membrane lipid metabolism; glycerophospholipid metabolism. Its function is as follows. Catalyzes the reduction of the glycolytic intermediate dihydroxyacetone phosphate (DHAP) to sn-glycerol 3-phosphate (G3P), the key precursor for phospholipid synthesis. This chain is Glycerol-3-phosphate dehydrogenase [NAD(P)+], found in Streptococcus equi subsp. equi (strain 4047).